A 450-amino-acid chain; its full sequence is Glutamate--tRNA ligase 1 (450 aa).

The 'HIGH' region signature appears at 7 to 17 (PSPTGYMHVGN). The short motif at 236 to 240 (KISKR) is the 'KMSKS' region element. Lys-239 serves as a coordination point for ATP.

The protein belongs to the class-I aminoacyl-tRNA synthetase family. Glutamate--tRNA ligase type 1 subfamily. Monomer.

It localises to the cytoplasm. The enzyme catalyses tRNA(Glu) + L-glutamate + ATP = L-glutamyl-tRNA(Glu) + AMP + diphosphate. Functionally, catalyzes the attachment of glutamate to tRNA(Glu) in a two-step reaction: glutamate is first activated by ATP to form Glu-AMP and then transferred to the acceptor end of tRNA(Glu). The sequence is that of Glutamate--tRNA ligase 1 from Anaplasma phagocytophilum (strain HZ).